The following is a 366-amino-acid chain: MREETPEQPAPLRSGYTTGSCATATSLAAARLLLGGTTSDAVRIVLPKGQQVPMRLEFCRAWENGAEAGTLKDAGDDPDVTHGALVFARVRLSAAPGVRFHAGPGVGTVTRPGLTLAVGEPAINPVPRQMMERHLTQLAAEHGYTGGFEVTIGIEGGEALALKTMNPRLGILGGLSILGTSGIVRPFSCSAYIASIHQGIDVARANGVRHIAACTGNASEDAMRRRYALPEIALIEMGDFAGAVLKHLRKAPVEKLSLCGGFGKISKLAGGHLDLHSRHSSIDLPQLAGWAAALGASAALQQSMRAANTSQQALAQAHAEGVALGDAVCAHALRFARSIVPAEVRLEVFAIDRQGNLVGQAGEERS.

This sequence belongs to the CbiD family.

It carries out the reaction Co-precorrin-5B + S-adenosyl-L-methionine = Co-precorrin-6A + S-adenosyl-L-homocysteine. The protein operates within cofactor biosynthesis; adenosylcobalamin biosynthesis; cob(II)yrinate a,c-diamide from sirohydrochlorin (anaerobic route): step 6/10. Functionally, catalyzes the methylation of C-1 in cobalt-precorrin-5B to form cobalt-precorrin-6A. The protein is Cobalt-precorrin-5B C(1)-methyltransferase of Pseudomonas paraeruginosa (strain DSM 24068 / PA7) (Pseudomonas aeruginosa (strain PA7)).